A 322-amino-acid chain; its full sequence is MGTNTIRAFIILYLLAVCGCVEYDVDNNVQICTCANVSHINHTFWYYNNKVIALATEDRTSGYISSFIKRVNISLTCLNISSLRYEDSGSYKGVSHLKDGVIVTTTMNISVKANIIDLTGRVCYLTRNYCEVKIRCEIKSFALNGSITPLHMILGTLDRWKYLPFPTDDYRYVGELKRYISGNPYPIESLALEISATFNRFTIVKNNDDEFSCYLFSQNYSFHKMLNARHICESEWEALNNNNDNSSSMPVSHNNRANDLSSMMSQLQNDNDDNNDYSAPMNINNLIMIVLITMLSIIIIIIVVIAIIAMYKRSKYSHIDDN.

The signal sequence occupies residues Met-1–Cys-20. Asn-36, Asn-41, Asn-72, Asn-79, Asn-108, Asn-144, Asn-219, and Asn-245 each carry an N-linked (GlcNAc...) asparagine; by host glycan. A helical transmembrane segment spans residues Ile-287–Ile-307.

Belongs to the orthopoxvirus OPG049 family.

The protein resides in the host cell membrane. Its function is as follows. Plays a role in the spread of virus to neighboring cells ex vivo. In Homo sapiens (Human), this protein is Protein OPG049 (OPG049).